The primary structure comprises 557 residues: Hepatocyte nuclear factor 1-beta (557 aa).

Residues 1–31 form a dimerization region; that stretch reads MVSKLTSLQQELLSALLSSGVTKEVLVQALE. The HNF-p1 domain occupies 1–32; sequence MVSKLTSLQQELLSALLSSGVTKEVLVQALEE. Phosphoserine occurs at positions 49, 52, 75, and 80. The segment at 64–85 is disordered; sequence TLTNGHAKGRLSGDEGSEDGDD. The POU-specific atypical domain occupies 93–188; sequence KELQALNTEE…ILRQFNQTVQ (96 aa). The homeobox; HNF1-type DNA-binding region spans 231–311; that stretch reads MRRNRFKWGP…NRRKEEAFRQ (81 aa). The segment at 324–352 is disordered; sequence HSLNPLLSHGSPHHQPSSSPPNKLSGVRY. Residues 328–344 are compositionally biased toward low complexity; sequence PLLSHGSPHHQPSSSPP.

The protein belongs to the HNF1 homeobox family. In terms of assembly, binds DNA as a dimer. Can form homodimer or heterodimer with HNF1-alpha. Interacts (via HNF-p1 domain) with PCBD1; the interaction increases its transactivation activity.

Its subcellular location is the nucleus. Its function is as follows. Transcription factor that binds to the inverted palindrome 5'-GTTAATNATTAAC-3'. Binds to the FPC element in the cAMP regulatory unit of the PLAU gene. Transcriptional activity is increased by coactivator PCBD1. The protein is Hepatocyte nuclear factor 1-beta (HNF1B) of Homo sapiens (Human).